A 454-amino-acid chain; its full sequence is Keratin, type I cuticular Ha5 (454 aa).

Residues 1-97 (MASKCLKASF…FGEGILTGNE (97 aa)) are head. The region spanning 97–407 (EKETMQFLND…GLLDSEDCKL (311 aa)) is the IF rod domain. The interval 98 to 125 (KETMQFLNDRLASYLEKCGSWSGRTRSW) is coil 1A. Positions 134–142 (SNSALPVPD) are linker 1. Residues 143-243 (YQSYFQTIEE…HEEEVNSLRC (101 aa)) form a coil 1B region. The interval 244 to 259 (QLGDRLNVEVDAAPPV) is linker 12. The tract at residues 260 to 403 (DLNRVLNEMR…NTYRGLLDSE (144 aa)) is coil 2. The tail stretch occupies residues 404–454 (DCKLPCNPCAPDHSPSKSCLPCLPAASCGPGMARTTCSPRPICVPCPGSRF).

It belongs to the intermediate filament family.

The chain is Keratin, type I cuticular Ha5 from Bos taurus (Bovine).